Reading from the N-terminus, the 185-residue chain is Peptidyl-tRNA hydrolase (185 aa).

Tyrosine 14 contributes to the tRNA binding site. The active-site Proton acceptor is histidine 19. Residues phenylalanine 64, asparagine 66, and asparagine 112 each coordinate tRNA.

The protein belongs to the PTH family. As to quaternary structure, monomer.

It is found in the cytoplasm. It carries out the reaction an N-acyl-L-alpha-aminoacyl-tRNA + H2O = an N-acyl-L-amino acid + a tRNA + H(+). Hydrolyzes ribosome-free peptidyl-tRNAs (with 1 or more amino acids incorporated), which drop off the ribosome during protein synthesis, or as a result of ribosome stalling. In terms of biological role, catalyzes the release of premature peptidyl moieties from peptidyl-tRNA molecules trapped in stalled 50S ribosomal subunits, and thus maintains levels of free tRNAs and 50S ribosomes. The polypeptide is Peptidyl-tRNA hydrolase (Alkaliphilus metalliredigens (strain QYMF)).